The primary structure comprises 95 residues: UPF0473 protein BPUM_2377 (95 aa).

It belongs to the UPF0473 family.

This Bacillus pumilus (strain SAFR-032) protein is UPF0473 protein BPUM_2377.